Consider the following 644-residue polypeptide: Protein FAM149B1 (644 aa).

3 disordered regions span residues asparagine 392–leucine 490, threonine 551–arginine 575, and glycine 609–leucine 644. Residues aspartate 395 to serine 404 show a composition bias toward basic and acidic residues. Positions proline 449–threonine 459 are enriched in polar residues. A compositionally biased stretch (polar residues) spans glutamine 626–leucine 644.

This sequence belongs to the FAM149 family.

This Danio rerio (Zebrafish) protein is Protein FAM149B1 (fam149b1).